Reading from the N-terminus, the 140-residue chain is Calcium-binding protein B (140 aa).

2 consecutive EF-hand domains span residues 38 to 73 and 74 to 109; these read ATLSKYKTQFMSYDINNSGDIDHYELQLLMEKINQP and KTYLELKKMIEQVDSTGKGAINFRDFIKMMTGKTSS. Ca(2+) contacts are provided by Asp51, Asn53, Ser55, Asp57, and Glu62.

This Dictyostelium discoideum (Social amoeba) protein is Calcium-binding protein B (cbpB).